A 4830-amino-acid polypeptide reads, in one-letter code: Siderophore peptide synthetase fer3 (4830 aa).

Residues 197–623 are adenylation 1; it reads LDQAEKFPDR…LGRMNAEQVK (427 aa). The Carrier 1 domain occupies 751–833; it reads ANEDPVTQAL…DLIPLLSDTT (83 aa). Ser-788 carries the post-translational modification O-(pantetheine 4'-phosphoryl)serine. Residues 879–1317 form a condensation 1 region; sequence QKIFPTTATQ…HSLMREPETT (439 aa). Residues 1358–1781 form an adenylation 2 region; that stretch reads FENKAATEPE…IGRRDDLVKL (424 aa). Residues 1929–2005 form the Carrier 2 domain; that stretch reads GEDGDLQCQV…MLIRGLATKT (77 aa). Ser-1966 carries the post-translational modification O-(pantetheine 4'-phosphoryl)serine. Positions 2048 to 2503 are condensation 2; it reads IPCSTLQEGM…LLDQVVSLLT (456 aa). Positions 2573–2977 are adenylation 3; it reads AGTPETACIN…LGRRDEQEKI (405 aa). The 77-residue stretch at 3122-3198 folds into the Carrier 3 domain; that stretch reads RPLSSLEREI…DIAAELSDSK (77 aa). Ser-3159 bears the O-(pantetheine 4'-phosphoryl)serine mark. Residues 3232–3621 form a condensation 3 region; sequence KVLPCLPSQE…RDRDELRISA (390 aa). The 76-residue stretch at 3685–3760 folds into the Carrier 4 domain; sequence TAAEEQIRDL…GLSKLLDQRQ (76 aa). Ser-3720 carries the O-(pantetheine 4'-phosphoryl)serine modification. Residues 3779–4199 are condensation 4; it reads RYKATPLQAG…GVQIKAGASD (421 aa). The 77-residue stretch at 4264-4340 folds into the Carrier 5 domain; it reads SLSTAEQDIV…RLTVATETRS (77 aa). Ser-4301 carries the post-translational modification O-(pantetheine 4'-phosphoryl)serine. The segment at 4381–4708 is condensation 5; that stretch reads VLPLLTGQQQ…DLVSRAEHQQ (328 aa).

Belongs to the NRP synthetase family.

Its pathway is siderophore biosynthesis. In terms of biological role, nonribosomal peptide synthetase; part of the gene cluster that mediates the biosynthesis of siderophore ferrichrome A which is contributing to organismal virulence. The first step of ferrichrome A biosynthesis is performed by the HMG-CoA synthase hcs1 which catalyzes the generation of HMG-CoA and CoA using acetoacetyl-CoA and acetyl-CoA as substrates. The enoyl-CoA isomerase/hydratase fer4 then catalyzes the conversion of hcs1-produced HMG-CoA to methylglutaconyl-CoA. The acyltransferase fer5 then fuses the fer4-generated methylglutaconyl-CoA with sid1-generated hydroxyornithine to yield methylglutaconyl hydroxyornithine. Methylglutaconyl hydroxyornithine is then available for use by the NRPS fer3 to generate ferrichrome A. The sequence is that of Siderophore peptide synthetase fer3 from Mycosarcoma maydis (Corn smut fungus).